Here is a 1210-residue protein sequence, read N- to C-terminus: Epidermal growth factor receptor (1210 aa).

A signal peptide spans 1-24 (MRPSGTAGAALLALLAALCPASRA). Residues 25–645 (LEEKKVCQGT…CARNGPKIPS (621 aa)) lie on the Extracellular side of the membrane. Cysteine 31 and cysteine 58 form a disulfide bridge. One copy of the Approximate repeat lies at 75–300 (DLSFLKTIQE…CVKKCPRNYV (226 aa)). Residues asparagine 128, asparagine 175, and asparagine 196 are each glycosylated (N-linked (GlcNAc...) asparagine). Intrachain disulfides connect cysteine 157–cysteine 187, cysteine 190–cysteine 199, cysteine 194–cysteine 207, cysteine 215–cysteine 223, cysteine 219–cysteine 231, cysteine 232–cysteine 240, cysteine 236–cysteine 248, cysteine 251–cysteine 260, cysteine 264–cysteine 291, cysteine 295–cysteine 307, cysteine 311–cysteine 326, cysteine 329–cysteine 333, and cysteine 337–cysteine 362. The residue at position 229 (serine 229) is a Phosphoserine. Residues asparagine 352, asparagine 361, asparagine 413, and asparagine 444 are each glycosylated (N-linked (GlcNAc...) asparagine). The stretch at 390–600 (QELDILKTVK…CVKTCPAGVM (211 aa)) is one Approximate repeat. 11 disulfide bridges follow: cysteine 470–cysteine 499, cysteine 506–cysteine 515, cysteine 510–cysteine 523, cysteine 526–cysteine 535, cysteine 539–cysteine 555, cysteine 558–cysteine 571, cysteine 562–cysteine 579, cysteine 582–cysteine 591, cysteine 595–cysteine 617, cysteine 620–cysteine 628, and cysteine 624–cysteine 636. Residue asparagine 528 is glycosylated (N-linked (GlcNAc...) asparagine). A glycan (N-linked (GlcNAc...) asparagine) is linked at asparagine 568. Residue asparagine 603 is glycosylated (N-linked (GlcNAc...) asparagine). Residues 646-668 (IATGMVGALLLLLVVALGIGLFM) form a helical membrane-spanning segment. Topologically, residues 669-1210 (RRRHIVRKRT…APQSSEFIGA (542 aa)) are cytoplasmic. Threonine 678 carries the phosphothreonine; by PKC and PKD/PRKD1 modification. An important for dimerization, phosphorylation and activation region spans residues 688–704 (LVEPLTPSGEAPNQALL). Threonine 693 is modified (phosphothreonine; by PKD/PRKD1). At serine 695 the chain carries Phosphoserine. The Protein kinase domain occupies 712-979 (FKKIKVLGSG…KMARDPQRYL (268 aa)). A Glycyl lysine isopeptide (Lys-Gly) (interchain with G-Cter in ubiquitin) cross-link involves residue lysine 716. 718–726 (LGSGAFGTV) is an ATP binding site. Lysine 737 participates in a covalent cross-link: Glycyl lysine isopeptide (Lys-Gly) (interchain with G-Cter in ubiquitin). Lysine 745 serves as a coordination point for ATP. The residue at position 745 (lysine 745) is an N6-(2-hydroxyisobutyryl)lysine. Glycyl lysine isopeptide (Lys-Gly) (interchain with G-Cter in ubiquitin) cross-links involve residues lysine 754 and lysine 757. Residue 790–791 (TQ) participates in ATP binding. Aspartate 837 acts as the Proton acceptor in catalysis. ATP is bound at residue aspartate 855. Lysine 867 participates in a covalent cross-link: Glycyl lysine isopeptide (Lys-Gly) (interchain with G-Cter in ubiquitin). Phosphotyrosine is present on tyrosine 869. Glycyl lysine isopeptide (Lys-Gly) (interchain with G-Cter in ubiquitin) cross-links involve residues lysine 929, lysine 960, and lysine 970. Phosphoserine is present on residues serine 991 and serine 995. Phosphotyrosine; by autocatalysis is present on residues tyrosine 998 and tyrosine 1016. A phosphoserine mark is found at serine 1026 and serine 1039. Phosphothreonine is present on threonine 1041. Serine 1042 bears the Phosphoserine mark. Cysteine 1049 carries the S-palmitoyl cysteine lipid modification. Position 1064 is a phosphoserine (serine 1064). Tyrosine 1069 carries the phosphotyrosine modification. Phosphoserine occurs at positions 1070, 1071, and 1081. 2 positions are modified to phosphotyrosine; by autocatalysis: tyrosine 1092 and tyrosine 1110. The interval 1097-1137 (VPKRPAGSVQNPVYHNQPLNPAPSRDPHYQDPHSTAVGNPE) is disordered. 2 stretches are compositionally biased toward polar residues: residues 1104–1115 (SVQNPVYHNQPL) and 1128–1137 (PHSTAVGNPE). The S-palmitoyl cysteine moiety is linked to residue cysteine 1146. Residue serine 1166 is modified to Phosphoserine. Tyrosine 1172 and tyrosine 1197 each carry phosphotyrosine; by autocatalysis. At arginine 1199 the chain carries Omega-N-methylarginine.

This sequence belongs to the protein kinase superfamily. Tyr protein kinase family. EGF receptor subfamily. As to quaternary structure, binding of the ligand triggers homo- and/or heterodimerization of the receptor triggering its autophosphorylation. Heterodimer with ERBB2. Forms a complex with CCDC88A/GIV (via SH2-like regions) and GNAI3 which leads to enhanced EGFR signaling and triggering of cell migration; binding to CCDC88A requires autophosphorylation of the EGFR C-terminal region, and ligand stimulation is required for recruitment of GNAI3 to the complex. Interacts with ERRFI1; inhibits dimerization of the kinase domain and autophosphorylation. Part of a complex with ERBB2 and either PIK3C2A or PIK3C2B. Interacts with GRB2; an adapter protein coupling the receptor to downstream signaling pathways. Interacts with GAB2; involved in signaling downstream of EGFR. Interacts with STAT3; mediates EGFR downstream signaling in cell proliferation. Interacts with RIPK1; involved in NF-kappa-B activation. Interacts (autophosphorylated) with CBL, CBLB and CBLC; involved in EGFR ubiquitination and regulation; interaction with CBL is reduced in the presence of tensin TNS4. Interacts with SOCS5; regulates EGFR degradation through ELOC- and ELOB-mediated ubiquitination and proteasomal degradation. Interacts with PRMT5; methylates EGFR and enhances interaction with PTPN6. Interacts (phosphorylated) with PTPN6; inhibits EGFR-dependent activation of MAPK/ERK. Interacts with COPG1; essential for regulation of EGF-dependent nuclear transport of EGFR by retrograde trafficking from the Golgi to the ER. Interacts with TNK2; this interaction is dependent on EGF stimulation and kinase activity of EGFR. Interacts with PCNA; positively regulates PCNA. Interacts with PELP1. Interacts with MUC1. Interacts with AP2M1. Interacts with FER. May interact with EPS8; mediates EPS8 phosphorylation. Interacts (via SH2 domains) with GRB2, NCK1 and NCK2. Interacts with ATXN2. Interacts with GAREM1. Interacts (ubiquitinated) with ANKRD13A/B/D; the interaction is direct and may regulate EGFR internalization after EGF stimulation. Interacts with GPER1; the interaction occurs in an estrogen-dependent manner. Interacts (via C-terminal cytoplasmic kinase domain) with ZPR1 (via zinc fingers). Interacts with RNF115 and RNF126. Interacts with GPRC5A (via its transmembrane domain). Interacts with FAM83B; positively regulates EGFR inducing its autophosphorylation in absence of stimulation by EGF. Interacts with LAPTM4B; positively correlates with EGFR activation. Interacts with STX19. Interacts with CD44. Interacts with PGRMC1; the interaction requires PGRMC1 homodimerization. Interacts with PIKFYVE. Interacts with NEU3. Interacts with TRAF4. Interacts with the ant venom OMEGA-myrmeciitoxin(02)-Mg1a. Interacts with CD82; this interaction facilitates ligand-induced endocytosis of the receptor and its subsequent desensitization. Phosphorylated on Tyr residues in response to EGF. Phosphorylation at Ser-695 is partial and occurs only if Thr-693 is phosphorylated. Phosphorylation at Thr-678 and Thr-693 by PRKD1 inhibits EGF-induced MAPK8/JNK1 activation. Dephosphorylation by PTPRJ prevents endocytosis and stabilizes the receptor at the plasma membrane. Autophosphorylation at Tyr-1197 is stimulated by methylation at Arg-1199 and enhances interaction with PTPN6. Autophosphorylation at Tyr-1092 and/or Tyr-1110 recruits STAT3. Dephosphorylated by PTPN1 and PTPN2. Post-translationally, monoubiquitinated and polyubiquitinated upon EGF stimulation; which does not affect tyrosine kinase activity or signaling capacity but may play a role in lysosomal targeting. Polyubiquitin linkage is mainly through 'Lys-63', but linkage through 'Lys-48', 'Lys-11' and 'Lys-29' also occurs. Deubiquitination by OTUD7B prevents degradation. Ubiquitinated by RNF115 and RNF126. Ubiquitinated by ZNRF1 or CBL at different lysines in response to EGF stimulation; leading to recruitment of the ESCRT machinery and subsequent degradation in the lysosomes. Deubiquitinated by UCHL1 leading to the inhibition of its degradation. In terms of processing, palmitoylated on Cys residues by ZDHHC20. Palmitoylation inhibits internalization after ligand binding, and increases the persistence of tyrosine-phosphorylated EGFR at the cell membrane. Palmitoylation increases the amplitude and duration of EGFR signaling. Methylated. Methylation at Arg-1199 by PRMT5 stimulates phosphorylation at Tyr-1197. In terms of tissue distribution, hypothalamus.

The protein localises to the cell membrane. It is found in the endoplasmic reticulum membrane. Its subcellular location is the golgi apparatus membrane. The protein resides in the nucleus membrane. It localises to the endosome. The protein localises to the endosome membrane. It is found in the nucleus. The catalysed reaction is L-tyrosyl-[protein] + ATP = O-phospho-L-tyrosyl-[protein] + ADP + H(+). Its activity is regulated as follows. Endocytosis and inhibition of the activated EGFR by phosphatases like PTPRJ and PTPRK constitute immediate regulatory mechanisms. Upon EGF-binding phosphorylates EPS15 that regulates EGFR endocytosis and activity. Moreover, inducible feedback inhibitors including LRIG1, SOCS4, SOCS5 and ERRFI1 constitute alternative regulatory mechanisms for the EGFR signaling. Receptor tyrosine kinase binding ligands of the EGF family and activating several signaling cascades to convert extracellular cues into appropriate cellular responses. Known ligands include EGF, TGFA/TGF-alpha, AREG, epigen/EPGN, BTC/betacellulin, epiregulin/EREG and HBEGF/heparin-binding EGF. Ligand binding triggers receptor homo- and/or heterodimerization and autophosphorylation on key cytoplasmic residues. The phosphorylated receptor recruits adapter proteins like GRB2 which in turn activates complex downstream signaling cascades. Activates at least 4 major downstream signaling cascades including the RAS-RAF-MEK-ERK, PI3 kinase-AKT, PLCgamma-PKC and STATs modules. May also activate the NF-kappa-B signaling cascade. Also directly phosphorylates other proteins like RGS16, activating its GTPase activity and probably coupling the EGF receptor signaling to the G protein-coupled receptor signaling. Also phosphorylates MUC1 and increases its interaction with SRC and CTNNB1/beta-catenin. Positively regulates cell migration via interaction with CCDC88A/GIV which retains EGFR at the cell membrane following ligand stimulation, promoting EGFR signaling which triggers cell migration. Plays a role in enhancing learning and memory performance. Plays a role in mammalian pain signaling (long-lasting hypersensitivity). The chain is Epidermal growth factor receptor (EGFR) from Macaca mulatta (Rhesus macaque).